The following is a 1040-amino-acid chain: Probable starch synthase 4, chloroplastic/amyloplastic (1040 aa).

The N-terminal 42 residues, 1 to 42 (MTTKLSSFCFLTHGLAGISCEREHGSSRRFFYLPSRRLVSTS), are a transit peptide targeting the chloroplast. The tract at residues 43–142 (CKMRQQRGFD…KSKTAKKKGE (100 aa)) is disordered. 2 stretches are compositionally biased toward basic and acidic residues: residues 52-61 (DSSKRQEVKK) and 112-124 (NHADENLEKKDDI). The stretch at 187-466 (ELMTMIRSAE…EESKKKSRDE (280 aa)) forms a coiled coil. ADP is bound by residues Lys-556, Gly-559, and Asp-562. The (1,4-alpha-D-glucosyl)n site is built by Trp-679 and Gln-680. 7 residues coordinate ADP: Arg-849, Lys-854, Lys-906, Asp-908, Tyr-916, Leu-933, and Thr-934.

It belongs to the glycosyltransferase 1 family. Bacterial/plant glycogen synthase subfamily. As to quaternary structure, interacts with PTST2. Interacts with PII1; the interaction is essential for the initiation of starch granules biosynthesis in leaf chloroplasts. Expressed in leaves and flowers.

Its subcellular location is the plastid. It is found in the chloroplast. It localises to the amyloplast. The protein resides in the chloroplast stroma. The catalysed reaction is [(1-&gt;4)-alpha-D-glucosyl](n) + ADP-alpha-D-glucose = [(1-&gt;4)-alpha-D-glucosyl](n+1) + ADP + H(+). The protein operates within glycan biosynthesis; starch biosynthesis. Functionally, probably involved in the priming of starch granule formation. May play a regulatory role in the control of starch accumulation in plastids. Is necessary and sufficient to establish the correct number of starch granules observed in chloroplasts. The chain is Probable starch synthase 4, chloroplastic/amyloplastic from Arabidopsis thaliana (Mouse-ear cress).